Reading from the N-terminus, the 177-residue chain is Cell division protein ZapC (177 aa).

This sequence belongs to the ZapC family. As to quaternary structure, interacts directly with FtsZ.

The protein localises to the cytoplasm. In terms of biological role, contributes to the efficiency of the cell division process by stabilizing the polymeric form of the cell division protein FtsZ. Acts by promoting interactions between FtsZ protofilaments and suppressing the GTPase activity of FtsZ. The sequence is that of Cell division protein ZapC from Shewanella frigidimarina (strain NCIMB 400).